A 324-amino-acid chain; its full sequence is NAD(P)H-dependent D-xylose reductase xyl1 (324 aa).

Residue tyrosine 50 is the Proton donor of the active site. Residue histidine 112 participates in substrate binding. NAD(+) contacts are provided by residues 168 to 169, 217 to 226, and 273 to 283; these read SN, SSFGPTGFME, and KTSRPEVMAQN.

The protein belongs to the aldo/keto reductase family.

It carries out the reaction an alditol + NAD(+) = an aldose + NADH + H(+). It catalyses the reaction an alditol + NADP(+) = an aldose + NADPH + H(+). The enzyme catalyses xylitol + NAD(+) = D-xylose + NADH + H(+). The catalysed reaction is xylitol + NADP(+) = D-xylose + NADPH + H(+). The protein operates within carbohydrate metabolism; D-xylose degradation. It functions in the pathway carbohydrate degradation; L-arabinose degradation via L-arabinitol; D-xylulose 5-phosphate from L-arabinose (fungal route): step 1/5. In terms of biological role, catalyzes the initial reaction in the xylose utilization pathway by reducing D-xylose into xylitol. Xylose is a major component of hemicelluloses such as xylan. Most fungi utilize D-xylose via three enzymatic reactions, xylose reductase (XR), xylitol dehydrogenase (XDH), and xylulokinase, to form xylulose 5-phosphate, which enters pentose phosphate pathway. Also major aldose reductase in pentose and D-galactose catabolism. Reduces the pentose L-arabinose and the hexose D-galactose to their respective polyols. Responsible for extracellular beta-galactosidase formation and cellulase induction during growth on lactose. The polypeptide is NAD(P)H-dependent D-xylose reductase xyl1 (xyl1) (Hypocrea jecorina (Trichoderma reesei)).